A 90-amino-acid polypeptide reads, in one-letter code: Antitoxin epsilon (90 aa).

The protein belongs to the epsilon antitoxin family. In terms of assembly, in the presence of the zeta toxin, forms an inactive PezA(2)PezT(2) heterotetramer. The heterotetramer is still able to bind the zeta toxin substrate UNAG.

Its function is as follows. Antitoxin component of a type II toxin-antitoxin (TA) system. Neutralizes the toxic effect of cognate zeta toxin. Part of a postsegregational killing (PSK) system involved in the killing of plasmid-free cells. Continuous synthesis of the epsilon antitoxin is required to counteract the zeta toxin. The sequence is that of Antitoxin epsilon from Streptococcus pyogenes.